The following is a 90-amino-acid chain: Probable Fe(2+)-trafficking protein (90 aa).

The protein belongs to the Fe(2+)-trafficking protein family.

Could be a mediator in iron transactions between iron acquisition and iron-requiring processes, such as synthesis and/or repair of Fe-S clusters in biosynthetic enzymes. This Pseudoalteromonas translucida (strain TAC 125) protein is Probable Fe(2+)-trafficking protein.